We begin with the raw amino-acid sequence, 314 residues long: Thioredoxin reductase aclD (314 aa).

Residues 13-16, 35-40, histidine 47, and alanine 112 contribute to the FAD site; these read GGPA and DSKSYR. Cysteines 136 and 139 form a disulfide. Residues aspartate 281 and 288–289 each bind FAD; that span reads AA.

Belongs to the class-II pyridine nucleotide-disulfide oxidoreductase family. As to quaternary structure, homodimer. FAD serves as cofactor.

It participates in mycotoxin biosynthesis. Its function is as follows. Thioredoxin reductase; part of the gene cluster that mediates the biosynthesis of aspirochlorine (or antibiotic A30641), an unusual halogenated spiro compound with distinctive antifungal properties due to selective inhibition of protein biosynthesis, and which is also active against bacteria, viruses, and murine tumor cells. The non-ribosomal peptide synthetase (NRPS) aclP is responsible the formation of the diketopiperazine (DKP) core from the condensation of 2 phenylalanine residues. One Phe residue is tailored into chlorotyrosine by hydroxylation and chlorination, whereas the second Phe undergoes an unprecedented C-C bond cleavage to be converted into glycine. After formation of the DKP, sulfur is incorporated into the DKP by conjugation with glutathione by aclG, followed by its stepwise degradation to the thiol by aclI, aclJ and aclK, and the dithiol oxidation by aclT. In addition, oxygenases (aclB, aclC, aclL and aclO) and O-methyltransferases (aclM and aclU) act as tailoring enzymes to produce the intermediate dechloroaspirochlorine. Ultimately, chlorination of dechloroaspirochlorine by the halogenase aclH is the last step in the aspirochlorine pathway. The polypeptide is Thioredoxin reductase aclD (Aspergillus oryzae (strain ATCC 42149 / RIB 40) (Yellow koji mold)).